A 23-amino-acid chain; its full sequence is Potassium channel toxin kappa-KTx 2.3 (23 aa).

2 disulfides stabilise this stretch: C4–C22 and C8–C18.

It belongs to the short scorpion toxin superfamily. Potassium channel inhibitor kappa-KTx family. Kappa-KTx 2 subfamily. In terms of tissue distribution, expressed by the venom gland.

Its subcellular location is the secreted. In terms of biological role, decreases the amplitude of the potassium current of the rat channels Kv1.1/KCNA1 by 33% and Kv1.2/KCNA2 by 8% as well as human Kv1.3/KCNA3 by 70%. In Opisthacanthus madagascariensis (Scorpion), this protein is Potassium channel toxin kappa-KTx 2.3.